Reading from the N-terminus, the 345-residue chain is N-acetyl-gamma-glutamyl-phosphate reductase (345 aa).

Cysteine 149 is an active-site residue.

Belongs to the NAGSA dehydrogenase family. Type 1 subfamily.

Its subcellular location is the cytoplasm. The enzyme catalyses N-acetyl-L-glutamate 5-semialdehyde + phosphate + NADP(+) = N-acetyl-L-glutamyl 5-phosphate + NADPH + H(+). It functions in the pathway amino-acid biosynthesis; L-arginine biosynthesis; N(2)-acetyl-L-ornithine from L-glutamate: step 3/4. In terms of biological role, catalyzes the NADPH-dependent reduction of N-acetyl-5-glutamyl phosphate to yield N-acetyl-L-glutamate 5-semialdehyde. The sequence is that of N-acetyl-gamma-glutamyl-phosphate reductase from Bacillus cytotoxicus (strain DSM 22905 / CIP 110041 / 391-98 / NVH 391-98).